Consider the following 438-residue polypeptide: Ribosome biogenesis protein NOP53 (438 aa).

2 disordered regions span residues 1–23 and 247–346; these read MVAGKRTGAAKGSRHNKKYWRKG and HPKY…RKKE. Over residues 12-21 the composition is skewed to basic residues; sequence GSRHNKKYWR. Composition is skewed to basic and acidic residues over residues 265–288, 297–318, and 325–346; these read KSMKTGGEAEPKSQRVECDRMTKE, QKLDKEEKRRLEEKAKEQDSHN, and LHKELDEEEKQRHEESEVRKKE.

This sequence belongs to the NOP53 family.

It is found in the nucleus. The protein resides in the nucleolus. Its subcellular location is the nucleoplasm. Its function is as follows. May play a role in ribosome biogenesis, being required for integration of the 5S RNP into the ribosomal large subunit. This Caenorhabditis elegans protein is Ribosome biogenesis protein NOP53.